Consider the following 239-residue polypeptide: 1-(5-phosphoribosyl)-5-[(5-phosphoribosylamino)methylideneamino] imidazole-4-carboxamide isomerase (239 aa).

Residue Asp-8 is the Proton acceptor of the active site. Asp-129 (proton donor) is an active-site residue.

This sequence belongs to the HisA/HisF family.

It localises to the cytoplasm. It carries out the reaction 1-(5-phospho-beta-D-ribosyl)-5-[(5-phospho-beta-D-ribosylamino)methylideneamino]imidazole-4-carboxamide = 5-[(5-phospho-1-deoxy-D-ribulos-1-ylimino)methylamino]-1-(5-phospho-beta-D-ribosyl)imidazole-4-carboxamide. It participates in amino-acid biosynthesis; L-histidine biosynthesis; L-histidine from 5-phospho-alpha-D-ribose 1-diphosphate: step 4/9. In Legionella pneumophila (strain Corby), this protein is 1-(5-phosphoribosyl)-5-[(5-phosphoribosylamino)methylideneamino] imidazole-4-carboxamide isomerase.